A 408-amino-acid chain; its full sequence is Peptidase T (408 aa).

His78 contacts Zn(2+). Asp80 is a catalytic residue. Position 141 (Asp141) interacts with Zn(2+). Glu175 acts as the Proton acceptor in catalysis. Positions 176, 198, and 380 each coordinate Zn(2+).

The protein belongs to the peptidase M20B family. It depends on Zn(2+) as a cofactor.

It localises to the cytoplasm. The catalysed reaction is Release of the N-terminal residue from a tripeptide.. Cleaves the N-terminal amino acid of tripeptides. The polypeptide is Peptidase T (Clostridium botulinum (strain ATCC 19397 / Type A)).